The primary structure comprises 216 residues: Large ribosomal subunit protein uL3 (216 aa).

The segment at 134–153 (RATHGNSRSHNVPGSIGMAQ) is disordered. Glutamine 153 carries the post-translational modification N5-methylglutamine.

Belongs to the universal ribosomal protein uL3 family. In terms of assembly, part of the 50S ribosomal subunit. Forms a cluster with proteins L14 and L19. Post-translationally, methylated by PrmB.

One of the primary rRNA binding proteins, it binds directly near the 3'-end of the 23S rRNA, where it nucleates assembly of the 50S subunit. This chain is Large ribosomal subunit protein uL3, found in Cupriavidus taiwanensis (strain DSM 17343 / BCRC 17206 / CCUG 44338 / CIP 107171 / LMG 19424 / R1) (Ralstonia taiwanensis (strain LMG 19424)).